The primary structure comprises 184 residues: Chromobox protein homolog hpl-1 (184 aa).

The span at 1–13 (MSRQNPVRSTRGN) shows a compositional bias: polar residues. Disordered regions lie at residues 1-27 (MSRQNPVRSTRGNSLRAREAQQAQDAP) and 87-115 (AAKRTTRKRRYSPQPSTSSSAELQPSTSD). The 59-residue stretch at 37-95 (FVVEKVLNKRLTRGGSEYYIKWQGFPESECSWEPIENLQCDRMIQEYEKEAAKRTTRKR) folds into the Chromo domain. A compositionally biased stretch (polar residues) spans 99 to 115 (PQPSTSSSAELQPSTSD).

Interacts with histone demethylase spr-5. Interacts with chromobox protein homolog hpl-2. Interacts with histone H3 tails methylated at 'Lys-9' (H3K9me3) and 'Lys-23'(H3K23me2). Interacts with histone H1 variant his-24 (when monomethylated at 'Lys-14'); the interaction is direct. May interact with the REST corepressor rcor-1, histone deacetylase hda-1, and the histone demethylase lsd-1.

The protein localises to the nucleus. Seems to be involved in transcriptional silencing in heterochromatin-like complexes. Involved in epigenetic repression. Probably does not act as global transcriptional repressor. Plays a role in linking epigenetic regulation with the innate immune response. Acting in concert with chromobox protein homolog hpl-2 and histone H1 protein his-24, involved in reproduction, somatic gonad development, male tail development and vulval cell fate decisions; perhaps as a result of modulating expression of Hox genes mab-5 and egl-5. Role in growth and somatic gonad development is antagonized by histone-lysine N-methyltransferase set-2/SET1. Required for larval development, acting redundantly with hpl-2. Plays a role in the formation of the vulva and in fertility, acting together with a CoREST-like complex, and hpl-2. The sequence is that of Chromobox protein homolog hpl-1 from Caenorhabditis elegans.